The sequence spans 177 residues: Adenine phosphoribosyltransferase (177 aa).

It belongs to the purine/pyrimidine phosphoribosyltransferase family. As to quaternary structure, homodimer.

The protein localises to the cytoplasm. It carries out the reaction AMP + diphosphate = 5-phospho-alpha-D-ribose 1-diphosphate + adenine. Its pathway is purine metabolism; AMP biosynthesis via salvage pathway; AMP from adenine: step 1/1. In terms of biological role, catalyzes a salvage reaction resulting in the formation of AMP, that is energically less costly than de novo synthesis. The sequence is that of Adenine phosphoribosyltransferase from Chlorobaculum parvum (strain DSM 263 / NCIMB 8327) (Chlorobium vibrioforme subsp. thiosulfatophilum).